A 130-amino-acid chain; its full sequence is Small ribosomal subunit protein uS9 (130 aa).

It belongs to the universal ribosomal protein uS9 family.

The chain is Small ribosomal subunit protein uS9 from Anaeromyxobacter dehalogenans (strain 2CP-1 / ATCC BAA-258).